The chain runs to 113 residues: Iron-sulfur cluster insertion protein ErpA (113 aa).

Residues C41, C105, and C107 each coordinate iron-sulfur cluster.

This sequence belongs to the HesB/IscA family. As to quaternary structure, homodimer. Iron-sulfur cluster serves as cofactor.

Functionally, required for insertion of 4Fe-4S clusters for at least IspG. In Hydrogenovibrio crunogenus (strain DSM 25203 / XCL-2) (Thiomicrospira crunogena), this protein is Iron-sulfur cluster insertion protein ErpA.